Consider the following 189-residue polypeptide: Probable pericyclase scpY (189 aa).

It belongs to the pericyclase pydY family.

It functions in the pathway mycotoxin biosynthesis. Its function is as follows. Probable pericyclase; part of the gene scp cluster that mediates the biosynthesis of a hirsutellone-like compound that has still to be identified. This is Probable pericyclase scpY from Mollisia scopiformis (Conifer needle endophyte fungus).